Reading from the N-terminus, the 449-residue chain is Glutamate--tRNA ligase 2 (449 aa).

The 'HIGH' region signature appears at 11-21; the sequence is PSPTGFLHIGN. The 'KMSKS' region motif lies at 242 to 246; that stretch reads GLSKR. Residue lysine 245 coordinates ATP.

This sequence belongs to the class-I aminoacyl-tRNA synthetase family. Glutamate--tRNA ligase type 1 subfamily. In terms of assembly, monomer.

It localises to the cytoplasm. It carries out the reaction tRNA(Glu) + L-glutamate + ATP = L-glutamyl-tRNA(Glu) + AMP + diphosphate. Its function is as follows. Catalyzes the attachment of glutamate to tRNA(Glu) in a two-step reaction: glutamate is first activated by ATP to form Glu-AMP and then transferred to the acceptor end of tRNA(Glu). This is Glutamate--tRNA ligase 2 from Methylorubrum populi (strain ATCC BAA-705 / NCIMB 13946 / BJ001) (Methylobacterium populi).